Consider the following 620-residue polypeptide: Chaperone protein HscA homolog (620 aa).

The protein belongs to the heat shock protein 70 family.

Its function is as follows. Chaperone involved in the maturation of iron-sulfur cluster-containing proteins. Has a low intrinsic ATPase activity which is markedly stimulated by HscB. The polypeptide is Chaperone protein HscA homolog (Pseudomonas fluorescens (strain ATCC BAA-477 / NRRL B-23932 / Pf-5)).